The sequence spans 81 residues: Small ribosomal subunit protein uS17 (81 aa).

Belongs to the universal ribosomal protein uS17 family. As to quaternary structure, part of the 30S ribosomal subunit.

In terms of biological role, one of the primary rRNA binding proteins, it binds specifically to the 5'-end of 16S ribosomal RNA. The polypeptide is Small ribosomal subunit protein uS17 (Protochlamydia amoebophila (strain UWE25)).